A 318-amino-acid polypeptide reads, in one-letter code: NADH-ubiquinone oxidoreductase chain 1 (318 aa).

Helical transmembrane passes span 2-22, 69-89, 102-122, 146-166, 171-191, 222-242, 253-273, and 294-314; these read FLIN…FLTL, LLFI…WLPI, ILFI…SGWA, LAII…SSLI, YMWI…STLA, LFFL…AILF, EMFT…FLWI, and LPLT…LSSI.

The protein belongs to the complex I subunit 1 family. Core subunit of respiratory chain NADH dehydrogenase (Complex I) which is composed of 45 different subunits.

It localises to the mitochondrion inner membrane. The enzyme catalyses a ubiquinone + NADH + 5 H(+)(in) = a ubiquinol + NAD(+) + 4 H(+)(out). Core subunit of the mitochondrial membrane respiratory chain NADH dehydrogenase (Complex I) which catalyzes electron transfer from NADH through the respiratory chain, using ubiquinone as an electron acceptor. Essential for the catalytic activity and assembly of complex I. This chain is NADH-ubiquinone oxidoreductase chain 1 (MT-ND1), found in Oryctolagus cuniculus (Rabbit).